The primary structure comprises 153 residues: Aspartate carbamoyltransferase regulatory chain (153 aa).

Residues Cys109, Cys114, Cys138, and Cys141 each coordinate Zn(2+).

Belongs to the PyrI family. As to quaternary structure, contains catalytic and regulatory chains. It depends on Zn(2+) as a cofactor.

Involved in allosteric regulation of aspartate carbamoyltransferase. The chain is Aspartate carbamoyltransferase regulatory chain from Nitrosopumilus maritimus (strain SCM1).